Here is a 20-residue protein sequence, read N- to C-terminus: Serum amyloid P-component (20 aa).

The Pentraxin (PTX) domain occupies 1 to 20 (ZPIDLMGKVFVFDKELSPBI).

The protein belongs to the pentraxin family. Homopentamer. Pentraxin (or pentaxin) have a discoid arrangement of 5 non-covalently bound subunits.

Its subcellular location is the secreted. In Pleuronectes platessa (European plaice), this protein is Serum amyloid P-component.